A 543-amino-acid polypeptide reads, in one-letter code: Telomerase Cajal body protein 1 homolog (543 aa).

The interval 95-128 (GRPKNAVESPHAGVPMETSLAAEEEANGDEEEES) is disordered. The segment covering 116 to 127 (AEEEANGDEEEE) has biased composition (acidic residues). WD repeat units follow at residues 237–283 (PEGG…LRCS), 291–329 (DEVM…RFCD), and 378–421 (GHKG…QPLV).

Belongs to the TCAB1 family.

It is found in the nucleus. The protein resides in the cajal body. In terms of biological role, RNA chaperone that plays a key role in Cajal body formation. Specifically recognizes and binds the Cajal body box (CAB box) present in both small Cajal body RNAs (scaRNAs). Probably acts by mediating localization of scaRNAs to Cajal bodies. The sequence is that of Telomerase Cajal body protein 1 homolog from Drosophila melanogaster (Fruit fly).